The sequence spans 534 residues: Probable alpha-galactosidase A (534 aa).

An N-terminal signal peptide occupies residues 1 to 25 (MRLITRWIPLANALASTMPVQVVAS). A disulfide bridge connects residues Cys-47 and Cys-79. Residues Asn-50, Asn-88, Asn-94, and Asn-124 are each glycosylated (N-linked (GlcNAc...) asparagine). A disulfide bridge connects residues Cys-127 and Cys-157. The active-site Nucleophile is Asp-155. N-linked (GlcNAc...) asparagine glycosylation is present at Asn-204. Asp-213 (proton donor) is an active-site residue. The 122-residue stretch at 413 to 534 (CSQVIPTGLI…GLPAGVHVAL (122 aa)) folds into the Ricin B-type lectin domain. A disulfide bridge links Cys-430 with Cys-443. A glycan (N-linked (GlcNAc...) asparagine) is linked at Asn-444. An intrachain disulfide couples Cys-468 to Cys-481.

It belongs to the glycosyl hydrolase 27 family.

It localises to the secreted. It catalyses the reaction Hydrolysis of terminal, non-reducing alpha-D-galactose residues in alpha-D-galactosides, including galactose oligosaccharides, galactomannans and galactolipids.. Functionally, hydrolyzes a variety of simple alpha-D-galactoside as well as more complex molecules such as oligosaccharides and polysaccharides. This chain is Probable alpha-galactosidase A (aglA), found in Aspergillus oryzae (strain ATCC 42149 / RIB 40) (Yellow koji mold).